A 188-amino-acid chain; its full sequence is Putative 3-methyladenine DNA glycosylase (188 aa).

It belongs to the DNA glycosylase MPG family.

The polypeptide is Putative 3-methyladenine DNA glycosylase (Ehrlichia ruminantium (strain Gardel)).